Reading from the N-terminus, the 177-residue chain is NADH-quinone oxidoreductase subunit B (177 aa).

The [4Fe-4S] cluster site is built by Cys56, Cys57, Cys121, and Cys151.

It belongs to the complex I 20 kDa subunit family. In terms of assembly, NDH-1 is composed of 14 different subunits. Subunits NuoB, C, D, E, F, and G constitute the peripheral sector of the complex. [4Fe-4S] cluster is required as a cofactor.

The protein localises to the cell inner membrane. The catalysed reaction is a quinone + NADH + 5 H(+)(in) = a quinol + NAD(+) + 4 H(+)(out). Its function is as follows. NDH-1 shuttles electrons from NADH, via FMN and iron-sulfur (Fe-S) centers, to quinones in the respiratory chain. Couples the redox reaction to proton translocation (for every two electrons transferred, four hydrogen ions are translocated across the cytoplasmic membrane), and thus conserves the redox energy in a proton gradient. This is NADH-quinone oxidoreductase subunit B from Sphingopyxis alaskensis (strain DSM 13593 / LMG 18877 / RB2256) (Sphingomonas alaskensis).